The sequence spans 997 residues: Translation initiation factor IF-2 (997 aa).

The segment at Ser36 to Arg415 is disordered. Basic and acidic residues-rich tracts occupy residues Glu45 to Gly65 and Ala94 to Ala107. Positions Ala108 to Pro126 are enriched in low complexity. Residues His127–Lys147 show a composition bias toward basic and acidic residues. Residues Ala151–Arg162 are compositionally biased toward low complexity. The segment covering Pro163–Pro181 has biased composition (basic and acidic residues). Residues Val182–Glu196 show a composition bias toward low complexity. 2 stretches are compositionally biased toward basic and acidic residues: residues Ala197–Ala214 and Pro241–Asp252. Positions Gly300–Arg309 are enriched in gly residues. The span at Pro316–Gly335 shows a compositional bias: pro residues. The span at Gly378–Arg388 shows a compositional bias: basic and acidic residues. Basic residues predominate over residues Asn390–Gly399. In terms of domain architecture, tr-type G spans Pro496–Lys665. Residues Gly505–Thr512 form a G1 region. Gly505 to Thr512 contributes to the GTP binding site. The interval Gly530–His534 is G2. The segment at Asp551–Gly554 is G3. GTP contacts are provided by residues Asp551 to His555 and Asn605 to Asp608. The G4 stretch occupies residues Asn605–Asp608. Positions Ala641–Lys643 are G5.

Belongs to the TRAFAC class translation factor GTPase superfamily. Classic translation factor GTPase family. IF-2 subfamily.

It is found in the cytoplasm. Its function is as follows. One of the essential components for the initiation of protein synthesis. Protects formylmethionyl-tRNA from spontaneous hydrolysis and promotes its binding to the 30S ribosomal subunits. Also involved in the hydrolysis of GTP during the formation of the 70S ribosomal complex. The protein is Translation initiation factor IF-2 of Desulfovibrio desulfuricans (strain ATCC 27774 / DSM 6949 / MB).